Here is a 387-residue protein sequence, read N- to C-terminus: Phosphoglycerate kinase (387 aa).

Substrate-binding positions include 21 to 23 (DLN), arginine 36, 59 to 62 (HLGR), arginine 113, and arginine 146. Residues lysine 197, glutamate 314, and 340-343 (GGDT) each bind ATP.

Belongs to the phosphoglycerate kinase family. As to quaternary structure, monomer.

The protein localises to the cytoplasm. The enzyme catalyses (2R)-3-phosphoglycerate + ATP = (2R)-3-phospho-glyceroyl phosphate + ADP. The protein operates within carbohydrate degradation; glycolysis; pyruvate from D-glyceraldehyde 3-phosphate: step 2/5. The sequence is that of Phosphoglycerate kinase from Pseudomonas savastanoi pv. phaseolicola (strain 1448A / Race 6) (Pseudomonas syringae pv. phaseolicola (strain 1448A / Race 6)).